Consider the following 369-residue polypeptide: Anhydro-N-acetylmuramic acid kinase (369 aa).

Residue 12–19 coordinates ATP; sequence GTSLDGVD.

It belongs to the anhydro-N-acetylmuramic acid kinase family.

The enzyme catalyses 1,6-anhydro-N-acetyl-beta-muramate + ATP + H2O = N-acetyl-D-muramate 6-phosphate + ADP + H(+). It participates in amino-sugar metabolism; 1,6-anhydro-N-acetylmuramate degradation. Its pathway is cell wall biogenesis; peptidoglycan recycling. In terms of biological role, catalyzes the specific phosphorylation of 1,6-anhydro-N-acetylmuramic acid (anhMurNAc) with the simultaneous cleavage of the 1,6-anhydro ring, generating MurNAc-6-P. Is required for the utilization of anhMurNAc either imported from the medium or derived from its own cell wall murein, and thus plays a role in cell wall recycling. This chain is Anhydro-N-acetylmuramic acid kinase, found in Escherichia coli (strain SE11).